The sequence spans 124 residues: Large ribosomal subunit protein uL14 (124 aa).

The protein belongs to the universal ribosomal protein uL14 family. In terms of assembly, part of the 50S ribosomal subunit. Forms a cluster with proteins L3 and L19. In the 70S ribosome, L14 and L19 interact and together make contacts with the 16S rRNA in bridges B5 and B8.

In terms of biological role, binds to 23S rRNA. Forms part of two intersubunit bridges in the 70S ribosome. The chain is Large ribosomal subunit protein uL14 from Clostridium novyi (strain NT).